The following is a 433-amino-acid chain: Dihydrolipoyllysine-residue acetyltransferase component of pyruvate dehydrogenase complex (433 aa).

A Lipoyl-binding domain is found at 2 to 77; sequence AFEFRLPDIG…VVGDVIVKID (76 aa). N6-lipoyllysine is present on Lys43. Disordered stretches follow at residues 80–134 and 164–204; these read DAEE…PSVR and YLNG…FPET. Composition is skewed to basic and acidic residues over residues 84–103 and 117–126; these read MQFKGHGDDEDSKKEEKEQE and EKTEVDESKT. In terms of domain architecture, Peripheral subunit-binding (PSBD) spans 128 to 165; that stretch reads KAMPSVRKYARENGVNIKAVNGSGKNGRITKEDIDAYL. The segment covering 166 to 185 has biased composition (low complexity); that stretch reads NGGSSEEGSNTSAASESTSS. His404 is an active-site residue.

Belongs to the 2-oxoacid dehydrogenase family. Forms a 24-polypeptide structural core with octahedral symmetry. The cofactor is (R)-lipoate.

It catalyses the reaction N(6)-[(R)-dihydrolipoyl]-L-lysyl-[protein] + acetyl-CoA = N(6)-[(R)-S(8)-acetyldihydrolipoyl]-L-lysyl-[protein] + CoA. Its function is as follows. The pyruvate dehydrogenase complex catalyzes the overall conversion of pyruvate to acetyl-CoA and CO(2). It contains multiple copies of three enzymatic components: pyruvate dehydrogenase (E1), dihydrolipoamide acetyltransferase (E2) and lipoamide dehydrogenase (E3). In Staphylococcus epidermidis (strain ATCC 35984 / DSM 28319 / BCRC 17069 / CCUG 31568 / BM 3577 / RP62A), this protein is Dihydrolipoyllysine-residue acetyltransferase component of pyruvate dehydrogenase complex (pdhC).